The following is a 160-amino-acid chain: Prostaglandin E synthase 3 (160 aa).

One can recognise a CS domain in the interval 1–90 (MQPASAKWYD…ESGQSWPRLT (90 aa)). K33 is modified (N6-acetyllysine). K35 participates in a covalent cross-link: Glycyl lysine isopeptide (Lys-Gly) (interchain with G-Cter in SUMO2). At S44 the chain carries Phosphoserine. Residue K65 forms a Glycyl lysine isopeptide (Lys-Gly) (interchain with G-Cter in SUMO2) linkage. Phosphoserine is present on residues S85, S100, S113, S118, S148, and S151. A disordered region spans residues 124–160 (SEMMNNMGGDEDVDLPEVDGADDDSQDSDDEKMPDLE). A compositionally biased stretch (acidic residues) spans 132 to 153 (GDEDVDLPEVDGADDDSQDSDD). Residues 157–160 (PDLE) carry the PXLE motif motif.

This sequence belongs to the p23/wos2 family. As to quaternary structure, probably forms a complex composed of chaperones HSP90 and HSP70, co-chaperones STIP1/HOP, CDC37, PPP5C, PTGES3/p23, TSC1 and client protein TSC2. Binds to the progesterone receptor. Interacts with TERT; the interaction, together with HSP90AA1, is required for correct assembly and stabilization of the telomerase holoenzyme complex. Interacts (via PXLE motif) with EGLN1/PHD2, recruiting EGLN1/PHD2 to the HSP90 pathway to facilitate HIF alpha proteins hydroxylation. Interacts with HSP90AA1, FLCN, FNIP1 and FNIP2. Post-translationally, proteolytically cleaved by caspase-7 (CASP7) in response to apoptosis, leading to its inactivation. Detected in testis and ovary, at lower levels in endometrium, myometrium, kidney and lung, and only faintly in spleen, heart and muscle (at protein level). Expressed at high levels in glandular and luminal epithelial cells of the endometrium, but also detected in stromal cells (at protein level).

The protein localises to the cytoplasm. It carries out the reaction prostaglandin H2 = prostaglandin E2. The protein operates within lipid metabolism; prostaglandin biosynthesis. Its function is as follows. Cytosolic prostaglandin synthase that catalyzes the oxidoreduction of prostaglandin endoperoxide H2 (PGH2) to prostaglandin E2 (PGE2). Molecular chaperone that localizes to genomic response elements in a hormone-dependent manner and disrupts receptor-mediated transcriptional activation, by promoting disassembly of transcriptional regulatory complexes. Facilitates HIF alpha proteins hydroxylation via interaction with EGLN1/PHD2, leading to recruit EGLN1/PHD2 to the HSP90 pathway. The sequence is that of Prostaglandin E synthase 3 (PTGES3) from Bos taurus (Bovine).